Here is a 334-residue protein sequence, read N- to C-terminus: Formamidase (334 aa).

The CN hydrolase domain maps to 14–260 (FLVAAIQFPV…WEIVTGEIYP (247 aa)). The active-site Proton acceptor is the Glu-60. The Proton donor role is filled by Lys-133. Cys-166 functions as the Nucleophile in the catalytic mechanism.

The protein belongs to the carbon-nitrogen hydrolase superfamily. Aliphatic amidase family.

It carries out the reaction formamide + H2O = formate + NH4(+). Functionally, is an aliphatic amidase with a restricted substrate specificity, as it only hydrolyzes formamide. This is Formamidase from Helicobacter pylori (strain P12).